We begin with the raw amino-acid sequence, 62 residues long: MAKTVVRKNESLDDALRRFKRTVSKSGTLQEYRKREFYEKPSVKKKLKSEAARKRKNRRRFK.

A compositionally biased stretch (basic and acidic residues) spans 43 to 52 (VKKKLKSEAA). The segment at 43-62 (VKKKLKSEAARKRKNRRRFK) is disordered. A compositionally biased stretch (basic residues) spans 53–62 (RKRKNRRRFK).

Belongs to the bacterial ribosomal protein bS21 family.

This is Small ribosomal subunit protein bS21 from Lactiplantibacillus plantarum (strain ATCC BAA-793 / NCIMB 8826 / WCFS1) (Lactobacillus plantarum).